Reading from the N-terminus, the 662-residue chain is Probable protein phosphatase CG10417 (662 aa).

Positions 23–564 (AVGASSMQGW…DNMTAVIVQF (542 aa)) constitute a PPM-type phosphatase domain. 2 residues coordinate Mn(2+): Asp57 and Gly58. 2 disordered regions span residues 219 to 275 (DGVA…FKHT) and 288 to 374 (GSND…DEDQ). Composition is skewed to polar residues over residues 238 to 252 (DSNT…STKN), 261 to 275 (NDQN…FKHT), and 288 to 319 (GSND…INSS). Phosphoserine occurs at positions 289 and 306. Residues 320 to 334 (QDDEFTDDDADYEEN) show a composition bias toward acidic residues. The span at 337–347 (VKSPDTSSAES) shows a compositional bias: polar residues. Acidic residues predominate over residues 349-374 (DCTENDDDGDEDGNEDSDEEETDEDQ). Mn(2+) contacts are provided by Asp506 and Asp555. Residues 591-609 (VSHSLNDQSASKRCASQNA) are compositionally biased toward polar residues. A disordered region spans residues 591–662 (VSHSLNDQSA…KEVTIIVSSS (72 aa)). Residues Ser592, Ser594, and Ser599 each carry the phosphoserine modification. Residues 616–637 (LEKNNSKRLKTDLEQENIKDRT) are compositionally biased toward basic and acidic residues. Thr637 is modified (phosphothreonine). Ser639 and Ser641 each carry phosphoserine.

This sequence belongs to the PP2C family. Mg(2+) serves as cofactor. Requires Mn(2+) as cofactor.

The catalysed reaction is O-phospho-L-seryl-[protein] + H2O = L-seryl-[protein] + phosphate. The enzyme catalyses O-phospho-L-threonyl-[protein] + H2O = L-threonyl-[protein] + phosphate. The chain is Probable protein phosphatase CG10417 from Drosophila melanogaster (Fruit fly).